Reading from the N-terminus, the 997-residue chain is mRNA 3'-end-processing protein RNA14 (997 aa).

Residues 1–152 (MASEGTSWGA…THAPVPPAVP (152 aa)) form a disordered region. Residues 32–44 (HDSLASGDADAAD) show a composition bias toward low complexity. Residues 46 to 56 (GTEDDGGEYDP) are compositionally biased toward acidic residues. A compositionally biased stretch (polar residues) spans 72–82 (SSGTQRQTSKP). A compositionally biased stretch (acidic residues) spans 92–111 (ASDDEDEDEDEDEDEDEDEQ). The span at 116 to 133 (VPQTDAVSTQNHPGPSTT) shows a compositional bias: polar residues. HAT repeat units lie at residues 194 to 226 (SPLE…LELK), 228 to 259 (NNFV…YIRR), 270 to 305 (QARR…FVKN), 319 to 352 (QKMD…FEMG), 389 to 422 (TNLP…WEKE), and 434 to 466 (AYNQ…WCFQ). The tract at residues 549 to 579 (LKQAAAQDPVQTSIEENDDDEDNTPKRSPTE) is disordered. An HAT 7 repeat occupies 654 to 686 (YKDPVGAKIFERGARLFPNDEMFMIEYLKYLHS). Disordered regions lie at residues 792 to 854 (QQSI…RRLD) and 907 to 997 (KAAG…GYRY).

The protein localises to the nucleus. Its subcellular location is the cytoplasm. In terms of biological role, component of the cleavage factor IA (CFIA) complex, which is involved in the endonucleolytic cleavage during polyadenylation-dependent pre-mRNA 3'-end formation. This chain is mRNA 3'-end-processing protein RNA14 (RNA14), found in Gibberella zeae (strain ATCC MYA-4620 / CBS 123657 / FGSC 9075 / NRRL 31084 / PH-1) (Wheat head blight fungus).